The chain runs to 141 residues: Large ribosomal subunit protein uL16 (141 aa).

It belongs to the universal ribosomal protein uL16 family. Part of the 50S ribosomal subunit.

In terms of biological role, binds 23S rRNA and is also seen to make contacts with the A and possibly P site tRNAs. The protein is Large ribosomal subunit protein uL16 of Kosmotoga olearia (strain ATCC BAA-1733 / DSM 21960 / TBF 19.5.1).